The primary structure comprises 653 residues: Macrolide export ATP-binding/permease protein MacB (653 aa).

An ABC transporter domain is found at 6-244 (LQLTRVTRRF…DAAPDASGGA (239 aa)). 42–49 (GASGSGKS) is an ATP binding site. Helical transmembrane passes span 278 to 298 (LLTM…VAIG), 526 to 546 (LTLL…IGVM), 587 to 607 (MGGA…SLFV), and 616 to 636 (AASI…FGFM).

Belongs to the ABC transporter superfamily. Macrolide exporter (TC 3.A.1.122) family. Homodimer.

The protein resides in the cell inner membrane. Its function is as follows. Non-canonical ABC transporter that contains transmembrane domains (TMD), which form a pore in the inner membrane, and an ATP-binding domain (NBD), which is responsible for energy generation. Confers resistance against macrolides. The protein is Macrolide export ATP-binding/permease protein MacB of Burkholderia pseudomallei (strain 1710b).